We begin with the raw amino-acid sequence, 248 residues long: Ubiquinone biosynthesis O-methyltransferase (248 aa).

The S-adenosyl-L-methionine site is built by R41, G72, D93, and M136.

This sequence belongs to the methyltransferase superfamily. UbiG/COQ3 family.

The enzyme catalyses a 3-demethylubiquinol + S-adenosyl-L-methionine = a ubiquinol + S-adenosyl-L-homocysteine + H(+). It catalyses the reaction a 3-(all-trans-polyprenyl)benzene-1,2-diol + S-adenosyl-L-methionine = a 2-methoxy-6-(all-trans-polyprenyl)phenol + S-adenosyl-L-homocysteine + H(+). Its pathway is cofactor biosynthesis; ubiquinone biosynthesis. Its function is as follows. O-methyltransferase that catalyzes the 2 O-methylation steps in the ubiquinone biosynthetic pathway. The sequence is that of Ubiquinone biosynthesis O-methyltransferase from Brucella abortus (strain 2308).